Consider the following 194-residue polypeptide: ATP-dependent Clp protease proteolytic subunit (194 aa).

The Nucleophile role is filled by S98. H123 is an active-site residue.

Belongs to the peptidase S14 family. Fourteen ClpP subunits assemble into 2 heptameric rings which stack back to back to give a disk-like structure with a central cavity, resembling the structure of eukaryotic proteasomes.

The protein resides in the cytoplasm. The enzyme catalyses Hydrolysis of proteins to small peptides in the presence of ATP and magnesium. alpha-casein is the usual test substrate. In the absence of ATP, only oligopeptides shorter than five residues are hydrolyzed (such as succinyl-Leu-Tyr-|-NHMec, and Leu-Tyr-Leu-|-Tyr-Trp, in which cleavage of the -Tyr-|-Leu- and -Tyr-|-Trp bonds also occurs).. Cleaves peptides in various proteins in a process that requires ATP hydrolysis. Has a chymotrypsin-like activity. Plays a major role in the degradation of misfolded proteins. The chain is ATP-dependent Clp protease proteolytic subunit from Staphylococcus carnosus (strain TM300).